Consider the following 209-residue polypeptide: Uracil phosphoribosyltransferase (209 aa).

5-phospho-alpha-D-ribose 1-diphosphate is bound by residues Arg79, Arg104, and 131-139 (DPMLATGGS). Residues Ile194 and 199–201 (GDA) contribute to the uracil site. Asp200 lines the 5-phospho-alpha-D-ribose 1-diphosphate pocket.

Belongs to the UPRTase family. Requires Mg(2+) as cofactor.

The enzyme catalyses UMP + diphosphate = 5-phospho-alpha-D-ribose 1-diphosphate + uracil. Its pathway is pyrimidine metabolism; UMP biosynthesis via salvage pathway; UMP from uracil: step 1/1. Allosterically activated by GTP. Its function is as follows. Catalyzes the conversion of uracil and 5-phospho-alpha-D-ribose 1-diphosphate (PRPP) to UMP and diphosphate. The sequence is that of Uracil phosphoribosyltransferase from Streptococcus mutans serotype c (strain ATCC 700610 / UA159).